The chain runs to 407 residues: Multifunctional CCA protein (407 aa).

2 residues coordinate ATP: Gly-8 and Arg-11. CTP-binding residues include Gly-8 and Arg-11. Mg(2+)-binding residues include Asp-21 and Asp-23. The ATP site is built by Arg-91, Arg-137, and Arg-140. CTP contacts are provided by Arg-91, Arg-137, and Arg-140. One can recognise an HD domain in the interval 226 to 327 (TGIHVMAVVD…VKLLERTDAL (102 aa)).

The protein belongs to the tRNA nucleotidyltransferase/poly(A) polymerase family. Bacterial CCA-adding enzyme type 1 subfamily. As to quaternary structure, monomer. Can also form homodimers and oligomers. Mg(2+) is required as a cofactor. Ni(2+) serves as cofactor.

It catalyses the reaction a tRNA precursor + 2 CTP + ATP = a tRNA with a 3' CCA end + 3 diphosphate. The catalysed reaction is a tRNA with a 3' CCA end + 2 CTP + ATP = a tRNA with a 3' CCACCA end + 3 diphosphate. Functionally, catalyzes the addition and repair of the essential 3'-terminal CCA sequence in tRNAs without using a nucleic acid template. Adds these three nucleotides in the order of C, C, and A to the tRNA nucleotide-73, using CTP and ATP as substrates and producing inorganic pyrophosphate. tRNA 3'-terminal CCA addition is required both for tRNA processing and repair. Also involved in tRNA surveillance by mediating tandem CCA addition to generate a CCACCA at the 3' terminus of unstable tRNAs. While stable tRNAs receive only 3'-terminal CCA, unstable tRNAs are marked with CCACCA and rapidly degraded. The polypeptide is Multifunctional CCA protein (Aromatoleum aromaticum (strain DSM 19018 / LMG 30748 / EbN1) (Azoarcus sp. (strain EbN1))).